A 469-amino-acid chain; its full sequence is 3-phosphoshikimate 1-carboxyvinyltransferase (469 aa).

The disordered stretch occupies residues 21–45 (KDTILTHSDQPRPLQSRANGPLTGK). Lys-52, Ser-53, and Arg-57 together coordinate 3-phosphoshikimate. Lys-52 lines the phosphoenolpyruvate pocket. Phosphoenolpyruvate contacts are provided by Gly-125 and Arg-153. 4 residues coordinate 3-phosphoshikimate: Ser-199, Gln-201, Asp-352, and Lys-379. Gln-201 contacts phosphoenolpyruvate. Asp-352 functions as the Proton acceptor in the catalytic mechanism. Residues Arg-383 and Arg-426 each contribute to the phosphoenolpyruvate site.

Belongs to the EPSP synthase family. As to quaternary structure, monomer.

It localises to the cytoplasm. It catalyses the reaction 3-phosphoshikimate + phosphoenolpyruvate = 5-O-(1-carboxyvinyl)-3-phosphoshikimate + phosphate. It participates in metabolic intermediate biosynthesis; chorismate biosynthesis; chorismate from D-erythrose 4-phosphate and phosphoenolpyruvate: step 6/7. Functionally, catalyzes the transfer of the enolpyruvyl moiety of phosphoenolpyruvate (PEP) to the 5-hydroxyl of shikimate-3-phosphate (S3P) to produce enolpyruvyl shikimate-3-phosphate and inorganic phosphate. This Bradyrhizobium diazoefficiens (strain JCM 10833 / BCRC 13528 / IAM 13628 / NBRC 14792 / USDA 110) protein is 3-phosphoshikimate 1-carboxyvinyltransferase.